The following is a 479-amino-acid chain: Bifunctional protein HldE (479 aa).

The ribokinase stretch occupies residues 1 to 322 (MIDDFRFGRI…RELLQEMPET (322 aa)). Position 198–201 (198–201 (NRIE)) interacts with ATP. Asp267 is a catalytic residue. The tract at residues 347–479 (FTNGCFDLVH…LVRGMQSAPS (133 aa)) is cytidylyltransferase.

This sequence in the N-terminal section; belongs to the carbohydrate kinase PfkB family. The protein in the C-terminal section; belongs to the cytidylyltransferase family. As to quaternary structure, homodimer.

It catalyses the reaction D-glycero-beta-D-manno-heptose 7-phosphate + ATP = D-glycero-beta-D-manno-heptose 1,7-bisphosphate + ADP + H(+). The enzyme catalyses D-glycero-beta-D-manno-heptose 1-phosphate + ATP + H(+) = ADP-D-glycero-beta-D-manno-heptose + diphosphate. The protein operates within nucleotide-sugar biosynthesis; ADP-L-glycero-beta-D-manno-heptose biosynthesis; ADP-L-glycero-beta-D-manno-heptose from D-glycero-beta-D-manno-heptose 7-phosphate: step 1/4. Its pathway is nucleotide-sugar biosynthesis; ADP-L-glycero-beta-D-manno-heptose biosynthesis; ADP-L-glycero-beta-D-manno-heptose from D-glycero-beta-D-manno-heptose 7-phosphate: step 3/4. In terms of biological role, catalyzes the phosphorylation of D-glycero-D-manno-heptose 7-phosphate at the C-1 position to selectively form D-glycero-beta-D-manno-heptose-1,7-bisphosphate. Its function is as follows. Catalyzes the ADP transfer from ATP to D-glycero-beta-D-manno-heptose 1-phosphate, yielding ADP-D-glycero-beta-D-manno-heptose. In Gluconobacter oxydans (strain 621H) (Gluconobacter suboxydans), this protein is Bifunctional protein HldE.